Consider the following 102-residue polypeptide: Parathymosin (102 aa).

Residues 1-102 (MSEKSVEAAA…RQKTENGASA (102 aa)) are disordered. Serine 2 bears the N-acetylserine mark. Serine 2 carries the post-translational modification Phosphoserine. The residue at position 4 (lysine 4) is an N6-acetyllysine. Serine 5 and serine 13 each carry phosphoserine. The segment covering 13–37 (SAKDLKEKKDKVEEKAGRKERKKEV) has biased composition (basic and acidic residues). At lysine 15 the chain carries N6-acetyllysine. Positions 38–75 (VEEEENGAEEEEEETAEDGEDDDEGDEEDEEEEEEEDE) are enriched in acidic residues. A Phosphothreonine modification is found at threonine 52. Position 92 is an N6-acetyllysine (lysine 92).

This sequence belongs to the pro/parathymosin family.

Its function is as follows. Parathymosin may mediate immune function by blocking the effect of prothymosin alpha which confers resistance to certain opportunistic infections. The chain is Parathymosin (Ptms) from Rattus norvegicus (Rat).